Reading from the N-terminus, the 333-residue chain is 4-hydroxyproline epimerase (333 aa).

The active-site Proton acceptor is Cys90. Residues 91 to 92 (GH) and Asp249 contribute to the substrate site. Catalysis depends on Cys253, which acts as the Proton donor. Substrate is bound at residue 254–255 (GT).

Belongs to the proline racemase family. In terms of assembly, homodimer.

The enzyme catalyses trans-4-hydroxy-L-proline = cis-4-hydroxy-D-proline. Its function is as follows. Allows intracellular utilization of 4-hydroxyproline, one of the major constituents of host collagen, by converting 4-hydroxy-L-proline to 4-hydroxy-D-proline, which can be further metabolized by intracellular 4-hydroxy-D-proline oxidases. Strong B-cell mitogen. Plays an important role in the regulation of intra- and extracellular amino acid pools, allowing the bacterium to profit from host precursors and enzymatic pathways. This chain is 4-hydroxyproline epimerase, found in Brucella suis (strain ATCC 23445 / NCTC 10510).